A 134-amino-acid chain; its full sequence is DNA-binding protein StpA (134 aa).

A disordered region spans residues 73 to 94 (EELLGNSSAAAPRAGKKRQPRP). A DNA-binding region spans residues 112 to 117 (QGRTPK).

The protein belongs to the histone-like protein H-NS family. Forms homodimers, can interact with H-NS. May interact with Hha and/or Cnu.

It localises to the cytoplasm. Its subcellular location is the nucleoid. In terms of biological role, a DNA-binding protein that acts in a fashion similar to H-NS, repressing gene transcription. A subset of H-NS/StpA-regulated genes require auxillary proteins for repression; these auxillary proteins (Hha and other similar proteins) may also modulate oligomerization of the H-NS/StpA complex. The sequence is that of DNA-binding protein StpA (stpA) from Escherichia coli O157:H7.